A 441-amino-acid polypeptide reads, in one-letter code: Glutamate-1-semialdehyde 2,1-aminomutase (441 aa).

Position 270 is an N6-(pyridoxal phosphate)lysine (K270).

The protein belongs to the class-III pyridoxal-phosphate-dependent aminotransferase family. HemL subfamily. As to quaternary structure, homodimer. Pyridoxal 5'-phosphate serves as cofactor.

Its subcellular location is the cytoplasm. The catalysed reaction is (S)-4-amino-5-oxopentanoate = 5-aminolevulinate. It functions in the pathway porphyrin-containing compound metabolism; protoporphyrin-IX biosynthesis; 5-aminolevulinate from L-glutamyl-tRNA(Glu): step 2/2. The chain is Glutamate-1-semialdehyde 2,1-aminomutase (hemL) from Propionibacterium freudenreichii subsp. freudenreichii.